The sequence spans 1150 residues: ATP-dependent helicase/deoxyribonuclease subunit B (1150 aa).

8–15 (GRSGSGKS) is an ATP binding site. [4Fe-4S] cluster-binding residues include Cys789, Cys1108, Cys1111, and Cys1117.

Belongs to the helicase family. AddB/RexB type 1 subfamily. As to quaternary structure, heterodimer of AddA and AddB. Requires Mg(2+) as cofactor. [4Fe-4S] cluster is required as a cofactor.

Its function is as follows. The heterodimer acts as both an ATP-dependent DNA helicase and an ATP-dependent, dual-direction single-stranded exonuclease. Recognizes the chi site generating a DNA molecule suitable for the initiation of homologous recombination. The AddB subunit has 5' -&gt; 3' nuclease activity but not helicase activity. This chain is ATP-dependent helicase/deoxyribonuclease subunit B, found in Clostridium tetani (strain Massachusetts / E88).